Reading from the N-terminus, the 458-residue chain is Histone acetyltransferase KAT8 (458 aa).

Composition is skewed to low complexity over residues 1 to 17 and 25 to 35; these read MAAQ…TSGT and PGENAAVEGPA. Residues 1–52 are disordered; sequence MAAQGATAAVAATTSGTVGEGEPGPGENAAVEGPARSPGRVSPPTPARGEPE. Alanine 2 carries the post-translational modification N-acetylalanine. Residues serine 37 and serine 42 each carry the phosphoserine modification. The Tudor-knot domain maps to 55–110; the sequence is VEIGETYLCRRPDSTWHSAEVIQSRVNDQEGREEFYVHYVGFNRRLDEWVDKNRLA. The residue at position 113 (lysine 113) is an N6-acetyllysine. The Nuclear localization signal signature appears at 140–149; that stretch reads RNQKRKHDEI. The 274-residue stretch at 174–447 folds into the MYST-type HAT domain; it reads TKVKYVDKIH…VDSVCLKWAP (274 aa). Residues 174-458 form a sufficient for interaction with KANSL1 region; the sequence is TKVKYVDKIH…KHKQVKLSKK (285 aa). Residues 207–232 form a C2HC MYST-type zinc finger; it reads LWLCEYCLKYMKFEKSYRFHLGQCQW. Zn(2+) is bound by residues cysteine 210, cysteine 213, histidine 226, and cysteine 230. Lysine 274 carries the N6-acetyllysine modification. 7 residues coordinate acetyl-CoA: isoleucine 317, threonine 319, arginine 325, arginine 326, glycine 327, glycine 329, and lysine 330. Serine 348 is subject to Phosphoserine. The active-site Proton donor/acceptor is the glutamate 350. The acetyl-CoA site is built by serine 354, serine 363, tyrosine 408, and lysine 432.

It belongs to the MYST (SAS/MOZ) family. Component of a multisubunit histone acetyltransferase complex (MSL) at least composed of the MOF/KAT8, MSL1/hampin, MSL2L1 and MSL3L1. Component of the NSL complex at least composed of MOF/KAT8, KANSL1, KANSL2, KANSL3, MCRS1, PHF20, OGT1/OGT, WDR5 and HCFC1. Component of some MLL1/MLL complex, at least composed of the core components KMT2A/MLL1, ASH2L, HCFC1, WDR5 and RBBP5, as well as the facultative components BACC1, CHD8, E2F6, HSP70, INO80C, KANSL1, LAS1L, MAX, MCRS1, MGA, MOF/KAT8, PELP1, PHF20, PRP31, RING2, RUVB1/TIP49A, RUVB2/TIP49B, SENP3, TAF1, TAF4, TAF6, TAF7, TAF9 and TEX10. Interacts with the chromodomain of MORF4L1/MRG15. Interacts with ATM (via its Tudor-knot domain); possibly regulating the activity of ATM. Interacts with NELFD. Post-translationally, acetylation at Lys-274 facilitates cognate substrate Lys-binding and acetylation. Although considered as an autoacetylation event, acetylation at Lys-274 probably takes place via a non-enzymatic process following acetyl-CoA-binding, which primes KAT8 for cognate protein-lysine acetylation. As to expression, during oocyte development, expressed in both oocytes and granulosa cells.

Its subcellular location is the nucleus. It is found in the chromosome. It localises to the mitochondrion. It carries out the reaction L-lysyl-[histone] + acetyl-CoA = N(6)-acetyl-L-lysyl-[histone] + CoA + H(+). The catalysed reaction is L-lysyl-[protein] + acetyl-CoA = N(6)-acetyl-L-lysyl-[protein] + CoA + H(+). The enzyme catalyses propanoyl-CoA + L-lysyl-[protein] = N(6)-propanoyl-L-lysyl-[protein] + CoA + H(+). Its activity is regulated as follows. The acetyltransferase activity is inhibited by anacardic acid derivatives. Functionally, histone acetyltransferase that catalyzes histone H4 acetylation at 'Lys-5'- and 'Lys-8' (H4K5ac and H4K8ac) or 'Lys-16' (H4K16ac), depending on the context. Catalytic component of the MSL histone acetyltransferase complex, a multiprotein complex that mediates the majority of histone H4 acetylation at 'Lys-16' (H4K16ac), an epigenetic mark that prevents chromatin compaction. H4K16ac constitutes the only acetylation mark intergenerationally transmitted and regulates key biological processes, such as oogenesis, embryonic stem cell pluripotency, hematopoiesis or glucose metabolism. The MSL complex is required for chromosome stability and genome integrity by maintaining homeostatic levels of H4K16ac. The MSL complex is also involved in gene dosage by promoting up-regulation of genes expressed by the X chromosome. X up-regulation is required to compensate for autosomal biallelic expression. The MSL complex also participates in gene dosage compensation by promoting expression of Tsix non-coding RNA. As part of the NSL histone acetyltransferase complex, catalyzes histone H4 acetylation at 'Lys-5'- and 'Lys-8' (H4K5ac and H4K8ac) at transcription start sites and promotes transcription initiation. The NSL complex also acts as a regulator of gene expression in mitochondria: KAT8 associates with mitochondrial DNA and controls expression of respiratory genes in an acetyltransferase-dependent mechanism. Also functions as an acetyltransferase for non-histone targets, such as ALKBH5, COX17, IRF3, KDM1A/LSD1, LMNA, PAX7 or TP53/p53. Acts as an inhibitor of antiviral immunity by acetylating IRF3, preventing IRF3 recruitment to promoters. Acts as a regulator of asymmetric division in muscle stem cells by mediating acetylation of PAX7. As part of the NSL complex, acetylates TP53/p53 at 'Lys-120'. Acts as a regulator of epithelial-to-mesenchymal transition as part of the NSL complex by mediating acetylation of KDM1A/LSD1. The NSL complex is required for nuclear architecture maintenance by mediating acetylation of LMNA. Promotes mitochondrial integrity by catalyzing acetylation of COX17. In addition to protein acetyltransferase activity, able to mediate protein propionylation. This chain is Histone acetyltransferase KAT8, found in Mus musculus (Mouse).